The following is a 163-amino-acid chain: Single-stranded DNA-binding protein 1 (163 aa).

Residues 1–104 (MINNVVLVGR…VVAESFQLLE (104 aa)) enclose the SSB domain. Residues 106–163 (RATREGGSPNSYNNGGYNNAPSNNSYSASSQQTPNFSRDESPFGNSNPMDISDDDLPF) are disordered. Residues 111 to 135 (GGSPNSYNNGGYNNAPSNNSYSASS) show a composition bias toward low complexity. The short motif at 158 to 163 (DDDLPF) is the Important for interaction with partner proteins element.

As to quaternary structure, homotetramer.

In terms of biological role, plays an important role in DNA replication, recombination and repair. Binds to ssDNA and to an array of partner proteins to recruit them to their sites of action during DNA metabolism. The chain is Single-stranded DNA-binding protein 1 (ssb1) from Streptococcus agalactiae serotype III (strain NEM316).